We begin with the raw amino-acid sequence, 617 residues long: 1-deoxy-D-xylulose-5-phosphate synthase (617 aa).

Thiamine diphosphate-binding positions include histidine 80 and 121–123 (GHS). Residue aspartate 152 participates in Mg(2+) binding. Thiamine diphosphate contacts are provided by residues 153 to 154 (GA), asparagine 181, tyrosine 277, and glutamate 360. Asparagine 181 contributes to the Mg(2+) binding site.

The protein belongs to the transketolase family. DXPS subfamily. In terms of assembly, homodimer. Mg(2+) serves as cofactor. Requires thiamine diphosphate as cofactor.

The catalysed reaction is D-glyceraldehyde 3-phosphate + pyruvate + H(+) = 1-deoxy-D-xylulose 5-phosphate + CO2. The protein operates within metabolic intermediate biosynthesis; 1-deoxy-D-xylulose 5-phosphate biosynthesis; 1-deoxy-D-xylulose 5-phosphate from D-glyceraldehyde 3-phosphate and pyruvate: step 1/1. In terms of biological role, catalyzes the acyloin condensation reaction between C atoms 2 and 3 of pyruvate and glyceraldehyde 3-phosphate to yield 1-deoxy-D-xylulose-5-phosphate (DXP). The sequence is that of 1-deoxy-D-xylulose-5-phosphate synthase from Blochmanniella floridana.